The chain runs to 430 residues: Trigger factor (430 aa).

Positions 163–248 (GNIAIIDFKG…IKDIKVKELP (86 aa)) constitute a PPIase FKBP-type domain.

Belongs to the FKBP-type PPIase family. Tig subfamily.

Its subcellular location is the cytoplasm. It carries out the reaction [protein]-peptidylproline (omega=180) = [protein]-peptidylproline (omega=0). Its function is as follows. Involved in protein export. Acts as a chaperone by maintaining the newly synthesized protein in an open conformation. Functions as a peptidyl-prolyl cis-trans isomerase. This is Trigger factor from Clostridium botulinum (strain ATCC 19397 / Type A).